A 420-amino-acid polypeptide reads, in one-letter code: UDP-N-acetylglucosamine 1-carboxyvinyltransferase (420 aa).

22-23 provides a ligand contact to phosphoenolpyruvate; sequence KN. Residue Arg91 participates in UDP-N-acetyl-alpha-D-glucosamine binding. Cys115 serves as the catalytic Proton donor. Cys115 carries the post-translational modification 2-(S-cysteinyl)pyruvic acid O-phosphothioketal. Residues 120-124, 160-163, Asp305, and Ile327 contribute to the UDP-N-acetyl-alpha-D-glucosamine site; these read RPVDL and KVSV.

The protein belongs to the EPSP synthase family. MurA subfamily.

It is found in the cytoplasm. It catalyses the reaction phosphoenolpyruvate + UDP-N-acetyl-alpha-D-glucosamine = UDP-N-acetyl-3-O-(1-carboxyvinyl)-alpha-D-glucosamine + phosphate. It functions in the pathway cell wall biogenesis; peptidoglycan biosynthesis. Functionally, cell wall formation. Adds enolpyruvyl to UDP-N-acetylglucosamine. The polypeptide is UDP-N-acetylglucosamine 1-carboxyvinyltransferase (Proteus mirabilis (strain HI4320)).